The primary structure comprises 381 residues: Probable serine/threonine-protein kinase PBL22 (381 aa).

C3 is lipidated: S-palmitoyl cysteine. Phosphothreonine is present on T64. The region spanning 75–351 (FREGNIIGKG…GDVVVAFEYI (277 aa)) is the Protein kinase domain. ATP contacts are provided by residues 81-89 (IGKGGFGSV) and K103. Y148 is subject to Phosphotyrosine. D201 (proton acceptor) is an active-site residue. Phosphoserine is present on S235. A phosphothreonine mark is found at T236 and T241. Y249 carries the post-translational modification Phosphotyrosine. The disordered stretch occupies residues 361–381 (RRTARKSTDSNRLRRETKQSY).

Belongs to the protein kinase superfamily. Ser/Thr protein kinase family. Palmitoylation at Cys-3 and Cys-6 are required for plasma membrane location.

The protein resides in the cell membrane. It catalyses the reaction L-seryl-[protein] + ATP = O-phospho-L-seryl-[protein] + ADP + H(+). The catalysed reaction is L-threonyl-[protein] + ATP = O-phospho-L-threonyl-[protein] + ADP + H(+). May be involved in plant defense signaling. This is Probable serine/threonine-protein kinase PBL22 from Arabidopsis thaliana (Mouse-ear cress).